Consider the following 213-residue polypeptide: Thymidylate kinase (213 aa).

10–17 (GLEGAGKT) provides a ligand contact to ATP.

Belongs to the thymidylate kinase family.

It catalyses the reaction dTMP + ATP = dTDP + ADP. Its function is as follows. Phosphorylation of dTMP to form dTDP in both de novo and salvage pathways of dTTP synthesis. The sequence is that of Thymidylate kinase from Escherichia coli O6:H1 (strain CFT073 / ATCC 700928 / UPEC).